The chain runs to 319 residues: Alpha/beta-gliadin A-V (319 aa).

A signal peptide spans 1 to 20 (MKTFLILALLAIVATTATTA). Positions 28–58 (LQPQNPSQQQPQEQVPLVQQQQFPGQQQQFP) are enriched in low complexity. Disordered stretches follow at residues 28–125 (LQPQ…QQAQ) and 258–278 (SQVSFQPSQLNPQAQGSVQPQ). 2 stretches are compositionally biased toward pro residues: residues 59-71 (PQQPYPQPQPFPS) and 81-104 (FPQPQPFPPQLPYPQPQSFPPQQP). Residues 105-125 (YPQQQPQYLQPQQPISQQQAQ) show a composition bias toward low complexity. Residues 267–278 (LNPQAQGSVQPQ) are compositionally biased toward polar residues.

Belongs to the gliadin/glutenin family. Substrate of transglutaminase.

Gliadin is the major seed storage protein in wheat. This Triticum aestivum (Wheat) protein is Alpha/beta-gliadin A-V.